The following is a 355-amino-acid chain: Alanine racemase (355 aa).

K34 serves as the catalytic Proton acceptor; specific for D-alanine. K34 is subject to N6-(pyridoxal phosphate)lysine. Residue R133 coordinates substrate. Y249 serves as the catalytic Proton acceptor; specific for L-alanine. M297 provides a ligand contact to substrate.

This sequence belongs to the alanine racemase family. It depends on pyridoxal 5'-phosphate as a cofactor.

It catalyses the reaction L-alanine = D-alanine. It participates in amino-acid biosynthesis; D-alanine biosynthesis; D-alanine from L-alanine: step 1/1. Functionally, catalyzes the interconversion of L-alanine and D-alanine. May also act on other amino acids. The sequence is that of Alanine racemase (alr) from Rickettsia canadensis (strain McKiel).